The sequence spans 396 residues: S-adenosylmethionine synthase (396 aa).

Histidine 16 is a binding site for ATP. Aspartate 18 is a binding site for Mg(2+). K(+) is bound at residue glutamate 44. Glutamate 57 and glutamine 100 together coordinate L-methionine. The segment at 100 to 110 is flexible loop; sequence QSPDINQGVDR. ATP-binding positions include 165–167, aspartate 240, 246–247, alanine 263, and lysine 267; these read DAK and RK. Aspartate 240 is a binding site for L-methionine. Lysine 271 lines the L-methionine pocket.

The protein belongs to the AdoMet synthase family. As to quaternary structure, homotetramer; dimer of dimers. Mg(2+) serves as cofactor. K(+) is required as a cofactor.

Its subcellular location is the cytoplasm. The catalysed reaction is L-methionine + ATP + H2O = S-adenosyl-L-methionine + phosphate + diphosphate. The protein operates within amino-acid biosynthesis; S-adenosyl-L-methionine biosynthesis; S-adenosyl-L-methionine from L-methionine: step 1/1. In terms of biological role, catalyzes the formation of S-adenosylmethionine (AdoMet) from methionine and ATP. The overall synthetic reaction is composed of two sequential steps, AdoMet formation and the subsequent tripolyphosphate hydrolysis which occurs prior to release of AdoMet from the enzyme. The chain is S-adenosylmethionine synthase from Pseudomonas fluorescens (strain SBW25).